The chain runs to 381 residues: Bifunctional enzyme Fae/Hps (381 aa).

The tract at residues 1–150 (MIKFGEAVLG…KEKYRALHPL (150 aa)) is formaldehyde-activating enzyme. The interval 151–381 (VGFRDVRLEY…DEDEDIGEEL (231 aa)) is 3-hexulose-6-phosphate synthase.

The protein in the N-terminal section; belongs to the formaldehyde-activating enzyme family. This sequence in the C-terminal section; belongs to the HPS/KGPDC family. HPS subfamily.

It carries out the reaction 5,6,7,8-tetrahydromethanopterin + formaldehyde = 5,10-methylenetetrahydromethanopterin + H2O. It catalyses the reaction D-ribulose 5-phosphate + formaldehyde = D-arabino-hex-3-ulose 6-phosphate. The protein operates within carbohydrate biosynthesis; D-ribose 5-phosphate biosynthesis. Catalyzes the condensation of formaldehyde with tetrahydromethanopterin (H(4)MPT) to 5,10-methylenetetrahydromethanopterin. In terms of biological role, catalyzes the reversible formation of ribulose-5-phosphate and formaldehyde from 3-hexulose-6-phosphate. The protein is Bifunctional enzyme Fae/Hps of Methanocaldococcus jannaschii (strain ATCC 43067 / DSM 2661 / JAL-1 / JCM 10045 / NBRC 100440) (Methanococcus jannaschii).